A 309-amino-acid polypeptide reads, in one-letter code: GTP cyclohydrolase FolE2 (309 aa).

This sequence belongs to the GTP cyclohydrolase IV family.

The enzyme catalyses GTP + H2O = 7,8-dihydroneopterin 3'-triphosphate + formate + H(+). It participates in cofactor biosynthesis; 7,8-dihydroneopterin triphosphate biosynthesis; 7,8-dihydroneopterin triphosphate from GTP: step 1/1. In terms of biological role, converts GTP to 7,8-dihydroneopterin triphosphate. The protein is GTP cyclohydrolase FolE2 of Serratia proteamaculans (strain 568).